A 339-amino-acid chain; its full sequence is Dihydroorotate dehydrogenase (quinone) (339 aa).

FMN contacts are provided by residues 64-68 (AGADK) and Thr88. Lys68 is a binding site for substrate. 113-117 (NRNGF) contacts substrate. The FMN site is built by Asn141 and Asn174. Asn174 lines the substrate pocket. Ser177 functions as the Nucleophile in the catalytic mechanism. Asn179 is a substrate binding site. FMN contacts are provided by Lys219 and Thr247. 248 to 249 (NT) contributes to the substrate binding site. FMN is bound by residues Gly270, Gly299, and 320 to 321 (YS).

It belongs to the dihydroorotate dehydrogenase family. Type 2 subfamily. Monomer. FMN serves as cofactor.

The protein localises to the cell membrane. The catalysed reaction is (S)-dihydroorotate + a quinone = orotate + a quinol. Its pathway is pyrimidine metabolism; UMP biosynthesis via de novo pathway; orotate from (S)-dihydroorotate (quinone route): step 1/1. Its function is as follows. Catalyzes the conversion of dihydroorotate to orotate with quinone as electron acceptor. This Haemophilus influenzae (strain 86-028NP) protein is Dihydroorotate dehydrogenase (quinone).